The sequence spans 132 residues: Small ribosomal subunit protein uS8 (132 aa).

It belongs to the universal ribosomal protein uS8 family. As to quaternary structure, part of the 30S ribosomal subunit. Contacts proteins S5 and S12.

One of the primary rRNA binding proteins, it binds directly to 16S rRNA central domain where it helps coordinate assembly of the platform of the 30S subunit. The protein is Small ribosomal subunit protein uS8 of Rhodospirillum centenum (strain ATCC 51521 / SW).